The following is a 331-amino-acid chain: Adenosine deaminase (331 aa).

His-12 and His-14 together coordinate Zn(2+). Residues His-14, Asp-16, and Gly-170 each contribute to the substrate site. His-197 lines the Zn(2+) pocket. The active-site Proton donor is the Glu-200. Asp-278 is a Zn(2+) binding site. Asp-279 serves as a coordination point for substrate.

Belongs to the metallo-dependent hydrolases superfamily. Adenosine and AMP deaminases family. Adenosine deaminase subfamily. Zn(2+) serves as cofactor.

The enzyme catalyses adenosine + H2O + H(+) = inosine + NH4(+). The catalysed reaction is 2'-deoxyadenosine + H2O + H(+) = 2'-deoxyinosine + NH4(+). Its function is as follows. Catalyzes the hydrolytic deamination of adenosine and 2-deoxyadenosine. In Shewanella oneidensis (strain ATCC 700550 / JCM 31522 / CIP 106686 / LMG 19005 / NCIMB 14063 / MR-1), this protein is Adenosine deaminase.